The following is a 368-amino-acid chain: Quinolinate synthase (368 aa).

Residues histidine 46 and serine 63 each contribute to the iminosuccinate site. Cysteine 110 contributes to the [4Fe-4S] cluster binding site. Iminosuccinate-binding positions include 141-143 (YVN) and serine 162. Cysteine 230 contacts [4Fe-4S] cluster. Residues 256–258 (HPE) and threonine 273 each bind iminosuccinate. Cysteine 320 provides a ligand contact to [4Fe-4S] cluster.

This sequence belongs to the quinolinate synthase family. Type 3 subfamily. The cofactor is [4Fe-4S] cluster.

It is found in the cytoplasm. It catalyses the reaction iminosuccinate + dihydroxyacetone phosphate = quinolinate + phosphate + 2 H2O + H(+). It participates in cofactor biosynthesis; NAD(+) biosynthesis; quinolinate from iminoaspartate: step 1/1. In terms of biological role, catalyzes the condensation of iminoaspartate with dihydroxyacetone phosphate to form quinolinate. The protein is Quinolinate synthase of Bacillus mycoides (strain KBAB4) (Bacillus weihenstephanensis).